The sequence spans 1005 residues: Band 4.1-like protein 2 (1005 aa).

The tract at residues 1–80 is disordered; sequence MTTEVGSVSE…SRGISRFIPP (80 aa). Threonine 2 is modified (N-acetylthreonine). Serine 7 is modified (phosphoserine). Basic and acidic residues predominate over residues 22–31; that stretch reads ATKEKPKEVA. Serine 39, serine 58, and serine 87 each carry phosphoserine. At threonine 89 the chain carries Phosphothreonine. A disordered region spans residues 93–196; it reads AKDGGDKKEP…GGAAKRETKE (104 aa). Basic and acidic residues-rich tracts occupy residues 111-157 and 169-196; these read VLDK…EKPS and VSKE…ETKE. Glycyl lysine isopeptide (Lys-Gly) (interchain with G-Cter in SUMO2) cross-links involve residues lysine 140 and lysine 144. Phosphoserine is present on residues serine 170, serine 208, serine 386, serine 402, serine 499, serine 550, serine 562, serine 575, serine 598, and serine 614. One can recognise an FERM domain in the interval 218–499; the sequence is VQCKVTLLDG…EHHTFYRLVS (282 aa). Residues 502–610 are hydrophilic; the sequence is QPPKAKFLTL…KAPHLQLIEG (109 aa). Residues 611 to 676 are spectrin--actin-binding; that stretch reads KKNSLRVEGD…WEKRRITPLS (66 aa). Tyrosine 623 is subject to Phosphotyrosine. Serine 627 and serine 647 each carry phosphoserine. Residues 652–800 are disordered; sequence KRNFMESTPE…EEAVPEASPV (149 aa). Residues 675–686 are compositionally biased toward polar residues; sequence LSLQTQGSSHET. Positions 690-711 are enriched in basic and acidic residues; it reads VEEKKRAEVGKDERVITEEMNG. Phosphoserine is present on residues serine 715 and serine 718. Positions 734 to 746 are enriched in low complexity; the sequence is STSLSSESSSSSS. Composition is skewed to basic and acidic residues over residues 754 to 770 and 780 to 793; these read GEYR…IREE and EPRP…REEA. At threonine 763 the chain carries Phosphothreonine. Serine 828 is subject to Phosphoserine. The C-terminal (CTD) stretch occupies residues 855 to 1005; it reads HVDIDVLPQI…ETELAEEGED (151 aa).

Interacts with FCGR1A. Interacts with TRPC4. Interacts (via CTD domain) with FKBP2. Interacts with NUMA1; this interaction is negatively regulated by CDK1 during metaphase and promotes anaphase-specific localization of NUMA1 in symmetrically dividing cells. In terms of tissue distribution, widely expressed.

It is found in the cytoplasm. Its subcellular location is the cytoskeleton. The protein localises to the cell cortex. The protein resides in the cell membrane. Its function is as follows. Required for dynein-dynactin complex and NUMA1 recruitment at the mitotic cell cortex during anaphase. In Homo sapiens (Human), this protein is Band 4.1-like protein 2.